The primary structure comprises 300 residues: Ribosomal RNA small subunit methyltransferase H (300 aa).

Residues 46-48 (GGH), Asp-65, Phe-92, Asp-107, and Gln-114 contribute to the S-adenosyl-L-methionine site.

This sequence belongs to the methyltransferase superfamily. RsmH family.

Its subcellular location is the cytoplasm. The enzyme catalyses cytidine(1402) in 16S rRNA + S-adenosyl-L-methionine = N(4)-methylcytidine(1402) in 16S rRNA + S-adenosyl-L-homocysteine + H(+). Specifically methylates the N4 position of cytidine in position 1402 (C1402) of 16S rRNA. This Prochlorococcus marinus (strain MIT 9515) protein is Ribosomal RNA small subunit methyltransferase H.